The chain runs to 336 residues: Retinol dehydrogenase 10-B (336 aa).

A helical; Signal-anchor transmembrane segment spans residues 7-27; sequence LFVVTFKIIWSFVLAGAKWFI. 40-64 contacts NADP(+); sequence VITGAGSGLGRLFALEFARRRATLV. A substrate-binding site is contributed by serine 192. Catalysis depends on tyrosine 205, which acts as the Proton acceptor.

This sequence belongs to the short-chain dehydrogenases/reductases (SDR) family.

It is found in the microsome membrane. It localises to the endoplasmic reticulum membrane. The enzyme catalyses all-trans-retinol + NADP(+) = all-trans-retinal + NADPH + H(+). It functions in the pathway cofactor metabolism; retinol metabolism. Functionally, retinol dehydrogenase with a clear preference for NADP. Converts all-trans-retinol to all-trans-retinal. Has no detectable activity towards 11-cis-retinol, 9-cis-retinol and 13-cis-retinol. This Danio rerio (Zebrafish) protein is Retinol dehydrogenase 10-B (rdh10b).